Reading from the N-terminus, the 386-residue chain is All-trans-retinol dehydrogenase [NAD(+)] ADH7 (386 aa).

C59 contacts Zn(2+). Residue 60-64 (RTDDH) participates in NAD(+) binding. Zn(2+) contacts are provided by H80, C110, C113, C116, C124, and C186. Residues 211 to 216 (GLGGVG), D235, K240, 281 to 283 (IGH), 304 to 306 (VGV), 329 to 331 (CVF), and R381 each bind NAD(+).

It belongs to the zinc-containing alcohol dehydrogenase family. Class-IV subfamily. Homodimer. Zn(2+) is required as a cofactor. In terms of tissue distribution, preferentially expressed in stomach.

The protein localises to the cytoplasm. It carries out the reaction a primary alcohol + NAD(+) = an aldehyde + NADH + H(+). The catalysed reaction is 10-hydroxydecanoate + NAD(+) = 10-oxodecanoate + NADH + H(+). The enzyme catalyses all-trans-retinol + NAD(+) = all-trans-retinal + NADH + H(+). It catalyses the reaction 9-cis-retinol + NAD(+) = 9-cis-retinal + NADH + H(+). It carries out the reaction all-trans-3,4-didehydroretinol + NAD(+) = all-trans-3,4-didehydroretinal + NADH + H(+). The catalysed reaction is all-trans-4-hydroxyretinol + NAD(+) = all-trans-4-hydroxyretinal + NADH + H(+). The enzyme catalyses all-trans-4-oxoretinol + NAD(+) = all-trans-4-oxoretinal + NADH + H(+). It catalyses the reaction 12-hydroxydodecanoate + NAD(+) = 12-oxododecanoate + NADH + H(+). It carries out the reaction 16-hydroxyhexadecanoate + NAD(+) = 16-oxohexadecanoate + NADH + H(+). The catalysed reaction is hexan-1-ol + NAD(+) = hexanal + NADH + H(+). The enzyme catalyses (E)-hex-2-en-1-ol + NAD(+) = (E)-hex-2-enal + NADH + H(+). It catalyses the reaction (E)-4-hydroxynon-2-en-1-ol + NAD(+) = (E)-4-hydroxynon-2-enal + NADH + H(+). With respect to regulation, retinol oxidation is inhibited by the detergent Tween 80. Ethanol inhibits both all-trans-retinol and 9-cis-retinol oxidation. 13-cis-retinol is an effective competitive inhibitor of the 9-cis-retinol oxidation. All-trans-retinoic acid is a powerful inhibitor of all-trans-retinol oxidation. 13-cis-retinoic acid is a powerful inhibitor of all-trans-retinol oxidation. Cimetidine competitively inhibited ethanol oxidation. Functionally, catalyzes the NAD-dependent oxidation of all-trans-retinol, alcohol, and omega-hydroxy fatty acids and their derivatives. Oxidizes preferentially all trans-retinol, all-trans-4-hydroxyretinol, 9-cis-retinol, 2-hexenol, and long chain omega-hydroxy fatty acids such as juniperic acid. In vitro can also catalyze the NADH-dependent reduction of all-trans-retinal and aldehydes and their derivatives. Reduces preferentially all trans-retinal, all-trans-4-oxoretinal and hexanal. Catalyzes in the oxidative direction with higher efficiency. Therefore may participate in retinoid metabolism, fatty acid omega-oxidation, and elimination of cytotoxic aldehydes produced by lipid peroxidation. This is All-trans-retinol dehydrogenase [NAD(+)] ADH7 from Homo sapiens (Human).